The chain runs to 338 residues: Glycerol-3-phosphate dehydrogenase [NAD(P)+] (338 aa).

The NADPH site is built by Trp12, His33, and Lys110. 3 residues coordinate sn-glycerol 3-phosphate: Lys110, Gly142, and Ser144. Ala146 is an NADPH binding site. Sn-glycerol 3-phosphate-binding residues include Lys197, Asp250, Ser260, Arg261, and Asn262. The active-site Proton acceptor is the Lys197. Arg261 contacts NADPH. Positions 286 and 288 each coordinate NADPH.

This sequence belongs to the NAD-dependent glycerol-3-phosphate dehydrogenase family.

The protein resides in the cytoplasm. The catalysed reaction is sn-glycerol 3-phosphate + NAD(+) = dihydroxyacetone phosphate + NADH + H(+). It carries out the reaction sn-glycerol 3-phosphate + NADP(+) = dihydroxyacetone phosphate + NADPH + H(+). The protein operates within membrane lipid metabolism; glycerophospholipid metabolism. Catalyzes the reduction of the glycolytic intermediate dihydroxyacetone phosphate (DHAP) to sn-glycerol 3-phosphate (G3P), the key precursor for phospholipid synthesis. In Acidobacterium capsulatum (strain ATCC 51196 / DSM 11244 / BCRC 80197 / JCM 7670 / NBRC 15755 / NCIMB 13165 / 161), this protein is Glycerol-3-phosphate dehydrogenase [NAD(P)+].